The sequence spans 306 residues: Ribonuclease H2 subunit B (306 aa).

The segment at 232–285 (LPDLSSPTPEPPVKKRRVSDAPVEADEDYTKYNSDNKSRKSNSKMTAAQKSLAK) is disordered. A compositionally biased stretch (basic and acidic residues) spans 259–269 (DYTKYNSDNKS).

It belongs to the RNase H2 subunit B family. As to quaternary structure, the RNase H2 complex is a heterotrimer composed of the catalytic subunit RNASEH2A and the non-catalytic subunits RNASEH2B and RNASEH2C.

It localises to the nucleus. Its function is as follows. Non catalytic subunit of RNase H2, an endonuclease that specifically degrades the RNA of RNA:DNA hybrids. Participates in DNA replication, possibly by mediating the removal of lagging-strand Okazaki fragment RNA primers during DNA replication. Mediates the excision of single ribonucleotides from DNA:RNA duplexes. The sequence is that of Ribonuclease H2 subunit B (rnaseh2b) from Xenopus laevis (African clawed frog).